A 284-amino-acid polypeptide reads, in one-letter code: Bifunctional protein FolD (284 aa).

Residues 165–167 (GRS) and Ser-190 contribute to the NADP(+) site.

The protein belongs to the tetrahydrofolate dehydrogenase/cyclohydrolase family. Homodimer.

It catalyses the reaction (6R)-5,10-methylene-5,6,7,8-tetrahydrofolate + NADP(+) = (6R)-5,10-methenyltetrahydrofolate + NADPH. The catalysed reaction is (6R)-5,10-methenyltetrahydrofolate + H2O = (6R)-10-formyltetrahydrofolate + H(+). It functions in the pathway one-carbon metabolism; tetrahydrofolate interconversion. Catalyzes the oxidation of 5,10-methylenetetrahydrofolate to 5,10-methenyltetrahydrofolate and then the hydrolysis of 5,10-methenyltetrahydrofolate to 10-formyltetrahydrofolate. The sequence is that of Bifunctional protein FolD from Streptococcus equi subsp. zooepidemicus (strain H70).